The primary structure comprises 273 residues: Bifunctional protein FolD (273 aa).

Residues 149–151 (GLG) and Val-215 contribute to the NADP(+) site.

This sequence belongs to the tetrahydrofolate dehydrogenase/cyclohydrolase family. In terms of assembly, homodimer.

The enzyme catalyses (6R)-5,10-methylene-5,6,7,8-tetrahydrofolate + NADP(+) = (6R)-5,10-methenyltetrahydrofolate + NADPH. It carries out the reaction (6R)-5,10-methenyltetrahydrofolate + H2O = (6R)-10-formyltetrahydrofolate + H(+). The protein operates within one-carbon metabolism; tetrahydrofolate interconversion. In terms of biological role, catalyzes the oxidation of 5,10-methylenetetrahydrofolate to 5,10-methenyltetrahydrofolate and then the hydrolysis of 5,10-methenyltetrahydrofolate to 10-formyltetrahydrofolate. In Mycoplasma genitalium (strain ATCC 33530 / DSM 19775 / NCTC 10195 / G37) (Mycoplasmoides genitalium), this protein is Bifunctional protein FolD.